The sequence spans 271 residues: Tryptophan synthase alpha chain (271 aa).

Catalysis depends on proton acceptor residues E49 and D60.

Belongs to the TrpA family. In terms of assembly, tetramer of two alpha and two beta chains.

The catalysed reaction is (1S,2R)-1-C-(indol-3-yl)glycerol 3-phosphate + L-serine = D-glyceraldehyde 3-phosphate + L-tryptophan + H2O. It participates in amino-acid biosynthesis; L-tryptophan biosynthesis; L-tryptophan from chorismate: step 5/5. Its function is as follows. The alpha subunit is responsible for the aldol cleavage of indoleglycerol phosphate to indole and glyceraldehyde 3-phosphate. The chain is Tryptophan synthase alpha chain from Buchnera aphidicola subsp. Schizaphis graminum (strain Sg).